A 373-amino-acid polypeptide reads, in one-letter code: RNA 3'-terminal phosphate cyclase-like protein (373 aa).

Belongs to the RNA 3'-terminal cyclase family. Type 2 subfamily. Part of the small subunit (SSU) processome, composed of more than 70 proteins and the RNA chaperone small nucleolar RNA (snoRNA) U3. Interacts with BMS1.

The protein localises to the nucleus. It is found in the nucleolus. Its function is as follows. As part of the small subunit (SSU) processome, it plays a role in 40S-ribosomal-subunit biogenesis in the early pre-rRNA processing steps at sites A0, A1 and A2 that are required for proper maturation of the 18S RNA. Activates BMS1 by promoting GDP/GTP exchange. Does not have cyclase activity. This chain is RNA 3'-terminal phosphate cyclase-like protein (RCL1), found in Bos taurus (Bovine).